The following is a 205-amino-acid chain: Retron Vc95 putative HNH endonuclease (205 aa).

In terms of biological role, putative HNH endonuclease component of antiviral defense system retron Vc95, composed of a non-coding RNA (ncRNA), a reverse transcriptase (RT), a probable ATP-binding protein and this protein. Expression of retron Vc95 confers protection against bacteriophages T2, T4 and T6. At multiplicity of infection (MOI) of 0.02 cultures slow growth when infected with T4 but do not collapse, at MOI 2 cultures enter growth stasis. The polypeptide is Retron Vc95 putative HNH endonuclease (Vibrio cholerae serotype O1 biovar El Tor).